Reading from the N-terminus, the 505-residue chain is Glycerol kinase (505 aa).

Threonine 14 serves as a coordination point for ADP. ATP contacts are provided by threonine 14, threonine 15, and serine 16. Residue threonine 14 coordinates sn-glycerol 3-phosphate. Position 18 (arginine 18) interacts with ADP. Sn-glycerol 3-phosphate is bound by residues arginine 84, glutamate 85, tyrosine 136, and aspartate 246. The glycerol site is built by arginine 84, glutamate 85, tyrosine 136, aspartate 246, and glutamine 247. ADP contacts are provided by threonine 268 and glycine 311. 4 residues coordinate ATP: threonine 268, glycine 311, glutamine 315, and glycine 412. ADP is bound by residues glycine 412 and asparagine 416.

This sequence belongs to the FGGY kinase family.

It carries out the reaction glycerol + ATP = sn-glycerol 3-phosphate + ADP + H(+). Its pathway is polyol metabolism; glycerol degradation via glycerol kinase pathway; sn-glycerol 3-phosphate from glycerol: step 1/1. With respect to regulation, inhibited by fructose 1,6-bisphosphate (FBP). Its function is as follows. Key enzyme in the regulation of glycerol uptake and metabolism. Catalyzes the phosphorylation of glycerol to yield sn-glycerol 3-phosphate. In Vibrio parahaemolyticus serotype O3:K6 (strain RIMD 2210633), this protein is Glycerol kinase.